The following is a 513-amino-acid chain: ATP synthase subunit alpha (513 aa).

Residue 169–176 (GDRQIGKT) coordinates ATP.

It belongs to the ATPase alpha/beta chains family. In terms of assembly, F-type ATPases have 2 components, CF(1) - the catalytic core - and CF(0) - the membrane proton channel. CF(1) has five subunits: alpha(3), beta(3), gamma(1), delta(1), epsilon(1). CF(0) has three main subunits: a(1), b(2) and c(9-12). The alpha and beta chains form an alternating ring which encloses part of the gamma chain. CF(1) is attached to CF(0) by a central stalk formed by the gamma and epsilon chains, while a peripheral stalk is formed by the delta and b chains.

Its subcellular location is the cell inner membrane. It carries out the reaction ATP + H2O + 4 H(+)(in) = ADP + phosphate + 5 H(+)(out). Functionally, produces ATP from ADP in the presence of a proton gradient across the membrane. The alpha chain is a regulatory subunit. The polypeptide is ATP synthase subunit alpha (Shewanella piezotolerans (strain WP3 / JCM 13877)).